The primary structure comprises 426 residues: Phosphomethylpyrimidine synthase (426 aa).

Residues Asn65, Met94, Tyr123, His162, 184-186 (SRG), 225-228 (DGMR), and Glu264 each bind substrate. Zn(2+) is bound at residue His268. Tyr291 serves as a coordination point for substrate. His332 contributes to the Zn(2+) binding site. The [4Fe-4S] cluster site is built by Cys408, Cys411, and Cys415.

Belongs to the ThiC family. It depends on [4Fe-4S] cluster as a cofactor.

The catalysed reaction is 5-amino-1-(5-phospho-beta-D-ribosyl)imidazole + S-adenosyl-L-methionine = 4-amino-2-methyl-5-(phosphooxymethyl)pyrimidine + CO + 5'-deoxyadenosine + formate + L-methionine + 3 H(+). Its pathway is cofactor biosynthesis; thiamine diphosphate biosynthesis. In terms of biological role, catalyzes the synthesis of the hydroxymethylpyrimidine phosphate (HMP-P) moiety of thiamine from aminoimidazole ribotide (AIR) in a radical S-adenosyl-L-methionine (SAM)-dependent reaction. The sequence is that of Phosphomethylpyrimidine synthase from Methanocaldococcus jannaschii (strain ATCC 43067 / DSM 2661 / JAL-1 / JCM 10045 / NBRC 100440) (Methanococcus jannaschii).